The sequence spans 99 residues: Small ribosomal subunit protein bS20 (99 aa).

This sequence belongs to the bacterial ribosomal protein bS20 family.

Functionally, binds directly to 16S ribosomal RNA. The chain is Small ribosomal subunit protein bS20 from Synechococcus sp. (strain CC9311).